The sequence spans 260 residues: Dolichol-phosphate mannosyltransferase subunit 1 (260 aa).

Residues 1–20 form a disordered region; it reads MAAEEASRSSPRFRREPKGR. Ala2 carries the N-acetylalanine modification. Ser9 bears the Phosphoserine mark. Pro32, Tyr34, Glu36, Ile63, Asp65, Asp118, Ala119, Asp120, Arg147, Arg234, and Lys240 together coordinate GDP-alpha-D-mannose. Asp120 contacts Mg(2+). Asp120 contributes to the Mn(2+) binding site.

Belongs to the glycosyltransferase 2 family. In terms of assembly, component of the dolichol-phosphate mannose (DPM) synthase complex composed of DPM1, DPM2 and DPM3; within the complex, directly interacts with DPM3. This interaction may stabilize DPM1. It depends on Mg(2+) as a cofactor. The cofactor is Mn(2+). Requires Ca(2+) as cofactor.

It is found in the endoplasmic reticulum. It catalyses the reaction a di-trans,poly-cis-dolichyl phosphate + GDP-alpha-D-mannose = a di-trans,poly-cis-dolichyl beta-D-mannosyl phosphate + GDP. Its pathway is protein modification; protein glycosylation. Functionally, transfers mannose from GDP-mannose to dolichol monophosphate to form dolichol phosphate mannose (Dol-P-Man) which is the mannosyl donor in pathways leading to N-glycosylation, glycosyl phosphatidylinositol membrane anchoring, and O-mannosylation of proteins; catalytic subunit of the dolichol-phosphate mannose (DPM) synthase complex. This is Dolichol-phosphate mannosyltransferase subunit 1 (DPM1) from Bos taurus (Bovine).